The following is a 962-amino-acid chain: IQ motif and SEC7 domain-containing protein 1 (962 aa).

Positions 1 to 96 are disordered; sequence MACRRRYLSS…STSVLRKQAE (96 aa). The segment covering 8-19 has biased composition (low complexity); it reads LSSLETGSSLST. The segment covering 30–39 has biased composition (polar residues); sequence SSETGTSLDS. Residues S89, S105, and S107 each carry the phosphoserine modification. The IQ domain occupies 134-163; that stretch reads TRHAARTIQTAFRQYQMNKNFERLRSSMSE. S180, S248, and S252 each carry phosphoserine. Disordered stretches follow at residues 264–292, 311–333, and 348–516; these read SEEV…HRKL, LSPP…DLRL, and KEDK…DSPA. Basic and acidic residues predominate over residues 273-292; that stretch reads ARARDTEPKPGLHGMDHRKL. 2 stretches are compositionally biased toward basic and acidic residues: residues 365 to 375 and 429 to 445; these read ERPEPRLRVEH and LPRE…RPLE. Low complexity predominate over residues 470-488; the sequence is DSINSTSNSNDTINCSSES. 2 positions are modified to phosphoserine: S511 and S514. The SEC7 domain occupies 516–709; that stretch reads AFSNDVIRKR…IGIYERIRKR (194 aa). The 93-residue stretch at 773–865 folds into the PH domain; that stretch reads HQREIFLFND…LRESVAEVQE (93 aa). S891 carries the post-translational modification Phosphoserine. Residue Y910 is modified to Phosphotyrosine. Residues 921-962 are disordered; sequence LSSSLRDLSEAGKRGRRSSAGSLESNVEFQPFQPSQPPVLCS. Phosphoserine is present on residues S923 and S924. A compositionally biased stretch (polar residues) spans 939-948; the sequence is SAGSLESNVE.

Belongs to the BRAG family. Interacts with ARF1 and ARF6. Interacts with GRIA2; the interaction is required for ARF6 activation.

Its subcellular location is the cytoplasm. It is found in the nucleus. The protein resides in the postsynaptic density. The protein localises to the cytoplasmic vesicle. It localises to the secretory vesicle. Its subcellular location is the synaptic vesicle. Guanine nucleotide exchange factor for ARF1 and ARF6. Guanine nucleotide exchange factor activity is enhanced by lipid binding. Accelerates GTP binding by ARFs of all three classes. Guanine nucleotide exchange protein for ARF6, mediating internalization of beta-1 integrin. Involved in neuronal development. In neurons, plays a role in the control of vesicle formation by endocytoc cargo. Upon long term depression, interacts with GRIA2 and mediates the activation of ARF6 to internalize synaptic AMPAR receptors. The protein is IQ motif and SEC7 domain-containing protein 1 of Rattus norvegicus (Rat).